A 737-amino-acid chain; its full sequence is Prospero homeobox protein 1 (737 aa).

Residues 1–28 (MPDHDSTALLSRQTKRRRVDIGVKRTVG) are interaction with RORG. Positions 103–135 (KNGGTEPSFQASGLSSTGSEVHQEDICSNSSRD) are enriched in polar residues. Residues 103-147 (KNGGTEPSFQASGLSSTGSEVHQEDICSNSSRDSPPECLSPFGRP) form a disordered region. Ser-177, Ser-179, Ser-199, Ser-291, and Ser-295 each carry phosphoserine. Positions 178–221 (HSPSVALRGNENEREMAPQSVSPRESYRENKRKQKLPQQQQQSF) are disordered. Residues 320–337 (MAENKPKREGSNKERDHG) show a composition bias toward basic and acidic residues. Disordered regions lie at residues 320–344 (MAEN…LQPE) and 444–476 (RKNS…AGFT). Lys-324 is covalently cross-linked (Glycyl lysine isopeptide (Lys-Gly) (interchain with G-Cter in SUMO2)). Polar residues predominate over residues 464 to 476 (LHQSPLSATAGFT). Ser-511 and Ser-514 each carry phosphoserine. Positions 525-547 (RTKMSSHHLSHHPCSPAHPPSTA) are disordered. Phosphoserine is present on Ser-557. In terms of domain architecture, Prospero-type homeo spans 577–635 (QEGLSPNHLKKAKLMFFYTRYPSSNMLKTYFSDVKFNRCITSQLIKWFSNFREFYYIQM). The segment at 577–735 (QEGLSPNHLK…KSPNCLQELL (159 aa)) is homeo-Prospero. The region spanning 636-735 (EKYARQAIND…KSPNCLQELL (100 aa)) is the Prospero domain. The tract at residues 723–729 (EIFKSPN) is essential for nuclear localization, interaction with RORG, repression of RORG transcriptional activator activity.

This sequence belongs to the Prospero homeodomain family. In terms of assembly, interacts with RORA and RORG (via AF-2 motif). In terms of tissue distribution, expressed in the young neurons of the subventricular region of the CNS, developing eye lens and pancreas. It is also found in the developing liver, heart and skeletal muscle. In the eye, expressed in the lens and retina at postnatal day 10. In the retina, localized to the inner nuclear layer. In the lens, localized to epithelial and fiber cells.

It localises to the nucleus. In terms of biological role, transcription factor involved in developmental processes such as cell fate determination, gene transcriptional regulation and progenitor cell regulation in a number of organs. Plays a critical role in embryonic development and functions as a key regulatory protein in neurogenesis and the development of the heart, eye lens, liver, pancreas and the lymphatic system. Involved in the regulation of the circadian rhythm. Represses: transcription of the retinoid-related orphan receptor RORG, transcriptional activator activity of RORA and RORG and the expression of RORA/G-target genes including core clock components: BMAL1, NPAS2 and CRY1 and metabolic genes: AVPR1A and ELOVL3. The polypeptide is Prospero homeobox protein 1 (Prox1) (Mus musculus (Mouse)).